The following is a 294-amino-acid chain: DNA replication complex GINS protein SLD5 (294 aa).

Belongs to the GINS4/SLD5 family. As to quaternary structure, component of the GINS complex which is a heterotetramer composed of SLD5, PSF1, PSF2 and PSF3. Interacts with PSF2.

It is found in the nucleus. Required for DNA replication. Functions as part of the GINS complex which plays an essential role in the initiation of DNA replication by binding to DNA replication origins and facilitating the assembly of the DNA replication machinery. The polypeptide is DNA replication complex GINS protein SLD5 (Saccharomyces cerevisiae (strain ATCC 204508 / S288c) (Baker's yeast)).